The sequence spans 403 residues: Phosphopentomutase (403 aa).

The Mn(2+) site is built by aspartate 13, aspartate 298, histidine 303, aspartate 339, histidine 340, and histidine 351.

This sequence belongs to the phosphopentomutase family. Mn(2+) serves as cofactor.

The protein localises to the cytoplasm. It catalyses the reaction 2-deoxy-alpha-D-ribose 1-phosphate = 2-deoxy-D-ribose 5-phosphate. The catalysed reaction is alpha-D-ribose 1-phosphate = D-ribose 5-phosphate. It participates in carbohydrate degradation; 2-deoxy-D-ribose 1-phosphate degradation; D-glyceraldehyde 3-phosphate and acetaldehyde from 2-deoxy-alpha-D-ribose 1-phosphate: step 1/2. Isomerase that catalyzes the conversion of deoxy-ribose 1-phosphate (dRib-1-P) and ribose 1-phosphate (Rib-1-P) to deoxy-ribose 5-phosphate (dRib-5-P) and ribose 5-phosphate (Rib-5-P), respectively. This Streptococcus pneumoniae (strain Hungary19A-6) protein is Phosphopentomutase.